The following is a 466-amino-acid chain: Adenosylhomocysteinase (466 aa).

Substrate is bound by residues T57, D132, and E192. 193–195 (TTT) is an NAD(+) binding site. Residues K222 and D226 each coordinate substrate. NAD(+)-binding positions include N227, 256–261 (GYGDVG), E279, N314, 335–337 (IGH), and N380.

It belongs to the adenosylhomocysteinase family. Requires NAD(+) as cofactor.

The protein resides in the cytoplasm. It carries out the reaction S-adenosyl-L-homocysteine + H2O = L-homocysteine + adenosine. It functions in the pathway amino-acid biosynthesis; L-homocysteine biosynthesis; L-homocysteine from S-adenosyl-L-homocysteine: step 1/1. May play a key role in the regulation of the intracellular concentration of adenosylhomocysteine. This is Adenosylhomocysteinase from Brucella melitensis biotype 2 (strain ATCC 23457).